A 211-amino-acid polypeptide reads, in one-letter code: Octanoyltransferase (211 aa).

In terms of domain architecture, BPL/LPL catalytic spans 32 to 207 (PCTYDEIWFV…ELSKFLEIFI (176 aa)). Residues 71–78 (RGGQITYH), 138–140 (SLG), and 151–153 (GLA) contribute to the substrate site. The active-site Acyl-thioester intermediate is Cys-169.

This sequence belongs to the LipB family.

It localises to the cytoplasm. It catalyses the reaction octanoyl-[ACP] + L-lysyl-[protein] = N(6)-octanoyl-L-lysyl-[protein] + holo-[ACP] + H(+). It participates in protein modification; protein lipoylation via endogenous pathway; protein N(6)-(lipoyl)lysine from octanoyl-[acyl-carrier-protein]: step 1/2. Its function is as follows. Catalyzes the transfer of endogenously produced octanoic acid from octanoyl-acyl-carrier-protein onto the lipoyl domains of lipoate-dependent enzymes. Lipoyl-ACP can also act as a substrate although octanoyl-ACP is likely to be the physiological substrate. This is Octanoyltransferase from Buchnera aphidicola subsp. Acyrthosiphon pisum (strain APS) (Acyrthosiphon pisum symbiotic bacterium).